Consider the following 184-residue polypeptide: UPF0398 protein OB1025 (184 aa).

It belongs to the UPF0398 family.

The sequence is that of UPF0398 protein OB1025 from Oceanobacillus iheyensis (strain DSM 14371 / CIP 107618 / JCM 11309 / KCTC 3954 / HTE831).